The following is a 208-amino-acid chain: MKKRLCAVLLASPLLFSAAVFADDAQQLRDKLIGTASLKADFKQTVTDVNKKVIQTGSGIFALAYPNQFYWHLTQPDESQIVADGKDLWIYNPFAEEVVIMDFAEAINASPIALLVHRDDATWSQYAVTKQQDCYEIKPKAIDSGILSVKVCFKNAQLANFNVADDKGNLSQFDLSNQQAITDKDKALFSFVLPDNVDVDDQRRKTAH.

Positions 1–22 (MKKRLCAVLLASPLLFSAAVFA) are cleaved as a signal peptide.

The protein belongs to the LolA family. As to quaternary structure, monomer.

It localises to the periplasm. Participates in the translocation of lipoproteins from the inner membrane to the outer membrane. Only forms a complex with a lipoprotein if the residue after the N-terminal Cys is not an aspartate (The Asp acts as a targeting signal to indicate that the lipoprotein should stay in the inner membrane). The protein is Outer-membrane lipoprotein carrier protein of Shewanella baltica (strain OS195).